Consider the following 842-residue polypeptide: Transient receptor potential cation channel subfamily V member 1 (842 aa).

The interval 1–64 (MKRWVSLDSG…DSEETSPMDC (64 aa)) is disordered. The Cytoplasmic portion of the chain corresponds to 1 to 435 (MKRWVSLDSG…QDKWDRVVKR (435 aa)). Residues 10–21 (GESEDPLPEDTC) show a composition bias toward acidic residues. One copy of the ANK 1 repeat lies at 113–141 (KLYDRRRIFEAVAQNNCQELESLLCFLQR). Residue Arg118 coordinates ATP. Thr147 is subject to Phosphothreonine; by PKA; in vitro. One copy of the ANK 2 repeat lies at 156–188 (TGKTCLLKAMLNLHSGQNDTIPLLLEIARQTDS). ATP is bound by residues Lys158, Lys163, Asn167, 202–205 (YKGQ), and 213–214 (ER). ANK repeat units lie at residues 206-231 (TALHIAIERRNMALVTLLVENGADVQ), 252-279 (ELPLSLAACTNQLAIVKFLLQNSWQPAD), 288-324 (NTVLHALVEVADNTPDNTKFVTSMYNEILILGAKLHP), and 338-361 (TPLALAAGSGKIGVLAYILQREIL). Thr373 is modified (phosphothreonine; by PKA; in vitro). The ANK 7 repeat unit spans residues 396–418 (NSVLEVIAYSSSETPNRHDMLLV). Residues 436–457 (IFYFNFFVYCLYMIIFTTAAYY) form a helical membrane-spanning segment. At 458–475 (RPVDGLPPYKLRNLPGDY) the chain is on the extracellular side. A helical membrane pass occupies residues 476-500 (FRVTGEILSVAGGVYFFFRGIQYFL). The Cytoplasmic segment spans residues 501 to 513 (QRRPSMKALFVDS). Ser505 carries the phosphoserine; by PKC/PRKCE modification. A resiniferatoxin-binding site is contributed by 514–515 (YS). The chain crosses the membrane as a helical span at residues 514–535 (YSEMLFFVQALFMLATVVLYFS). Over 536–538 (HCK) the chain is Extracellular. The helical transmembrane segment at 539 to 559 (EYVATMVFSLALGWINMLYYT) threads the bilayer. Arg560 is a resiniferatoxin binding site. Topologically, residues 560–562 (RGF) are cytoplasmic. A helical membrane pass occupies residues 563 to 601 (QQMGIYAVMIEKMILRDLCRFMFVYLVFLFGFSTAVVTL). The Extracellular portion of the chain corresponds to 602-633 (IEDGKNSSTSAESTSHRWRGFGCRSSDSSYNS). Residue Asn607 is glycosylated (N-linked (GlcNAc...) asparagine). The segment at residues 634-655 (LYSTCLELFKFTIGMGDLEFTE) is an intramembrane region (pore-forming). Na(+) is bound at residue Gly647. Positions 647–650 (GMGD) match the Selectivity filter motif. Residue Asp650 participates in Ca(2+) binding. Residues 656-659 (NYDF) are Extracellular-facing. The helical transmembrane segment at 660–686 (KAVFIILLLAYVILTYILLLNMLIALM) threads the bilayer. Over 687–842 (GETVNKIAQE…FKDSVAAAEK (156 aa)) the chain is Cytoplasmic. Residues 688–716 (ETVNKIAQESKSIWKLQRAITILDTEKGF) form an AD region. Residue Thr708 is modified to Phosphothreonine. The segment at 771–805 (EGVKRTLSFSLRSGRVSGRNWKNFALVPLLRDAST) is interaction with calmodulin. Residue Ser778 is modified to Phosphoserine. The tract at residues 781-796 (LRSGRVSGRNWKNFAL) is required for PIP2-mediated channel inhibition. At Ser804 the chain carries Phosphoserine; by PKC/PRKCE and PKC/PRKCZ. Ser824 bears the Phosphoserine mark.

Belongs to the transient receptor (TC 1.A.4) family. TrpV subfamily. TRPV1 sub-subfamily. In terms of assembly, homotetramer. Interacts with PIRT. May also form a heteromeric channel with TRPV3. Interacts with CALM, PRKCM and CSK. Interacts with PRKCG and NTRK1, probably by forming a trimeric complex. Interacts with the Scolopendra mutilans RhTx toxin. Interacts with TMEM100. Interacts with PACS2. In terms of processing, phosphorylation by PKA reverses capsaicin-induced dephosphorylation at multiple sites. Phosphorylation by CAMKII seems to regulate binding to vanilloids. Phosphorylated and modulated by PRKCE, PRKCM and probably PRKCZ. Dephosphorylation by calcineurin seems to lead to receptor desensitization and phosphorylation by CAMKII recovers activity.

It is found in the postsynaptic cell membrane. Its subcellular location is the cell projection. The protein localises to the dendritic spine membrane. The protein resides in the cell membrane. The enzyme catalyses Ca(2+)(in) = Ca(2+)(out). The catalysed reaction is Mg(2+)(in) = Mg(2+)(out). It carries out the reaction Na(+)(in) = Na(+)(out). It catalyses the reaction K(+)(in) = K(+)(out). Its activity is regulated as follows. The channel is sensitized by ATP binding. Repeated stimulation with capsaicin gives rise to progressively smaller responses, due to desensitization. This desensitization is triggered by the influx of calcium ions and is inhibited by elevated ATP levels. Ca(2+) and CALM displace ATP from its binding site and trigger a conformation change that leads to a closed, desensitized channel. The double-knot toxin (DkTx) from the Chinese earth tiger tarantula activates the channel and traps it in an open conformation. The Scolopendra mutilans RhTx toxin potentiates the heat activation pathway mediated by this channel by binding to the charge-rich outer pore region (in an activated state). Channel activity is activated via the interaction with PIRT and phosphatidylinositol 4,5-bisphosphate (PIP2). Both PIRT and PIP2 are required to activate channel activity. Intracellular PIP2 inhibits desensitization. Its function is as follows. Non-selective calcium permeant cation channel involved in detection of noxious chemical and thermal stimuli. Seems to mediate proton influx and may be involved in intracellular acidosis in nociceptive neurons. Involved in mediation of inflammatory pain and hyperalgesia. Sensitized by a phosphatidylinositol second messenger system activated by receptor tyrosine kinases, which involves PKC isozymes and PCL. Activation by vanilloids, like capsaicin, and temperatures higher than 42 degrees Celsius. Upon activation, exhibits a time- and Ca(2+)-dependent outward rectification, followed by a long-lasting refractory state. Mild extracellular acidic pH (6.5) potentiates channel activation by noxious heat and vanilloids, whereas acidic conditions (pH &lt;6) directly activate the channel. Can be activated by endogenous compounds, including 12-hydroperoxytetraenoic acid and bradykinin. Acts as ionotropic endocannabinoid receptor with central neuromodulatory effects. Triggers a form of long-term depression (TRPV1-LTD) mediated by the endocannabinoid anandamine in the hippocampus and nucleus accumbens by affecting AMPA receptors endocytosis. The protein is Transient receptor potential cation channel subfamily V member 1 (Trpv1) of Oryctolagus cuniculus (Rabbit).